We begin with the raw amino-acid sequence, 286 residues long: Glycine--tRNA ligase alpha subunit (286 aa).

Belongs to the class-II aminoacyl-tRNA synthetase family. In terms of assembly, tetramer of two alpha and two beta subunits.

It is found in the cytoplasm. The enzyme catalyses tRNA(Gly) + glycine + ATP = glycyl-tRNA(Gly) + AMP + diphosphate. The sequence is that of Glycine--tRNA ligase alpha subunit from Thermotoga petrophila (strain ATCC BAA-488 / DSM 13995 / JCM 10881 / RKU-1).